Here is an 88-residue protein sequence, read N- to C-terminus: Small ribosomal subunit protein bS20 (88 aa).

Belongs to the bacterial ribosomal protein bS20 family.

Binds directly to 16S ribosomal RNA. In Clostridium novyi (strain NT), this protein is Small ribosomal subunit protein bS20.